A 235-amino-acid polypeptide reads, in one-letter code: MKQKSWNIHLEEMMEAGVHFGHQARKWNPKMAPYIFTERKGIHIINLTQTARFLSEACDLVANASSKGKQFLIVGTKYQAADLIESSALKARCHYVNQKWLGGMLTNWSTIETRLQKFKDLENKKKTGTINRLPKKEAANLKRQLDHLQKYLGGIKYMTSLPDIVIIIDQQKEFTAIQECITLGIPTICLVDTDCDPDMTDIPIPANDDARASIRWILNKLTLAICEGRYNSIKN.

The protein belongs to the universal ribosomal protein uS2 family.

It localises to the plastid. Its subcellular location is the chloroplast. The sequence is that of Small ribosomal subunit protein uS2c (rps2) from Marchantia polymorpha (Common liverwort).